Reading from the N-terminus, the 1708-residue chain is 187-kDa microtubule-associated protein AIR9 (1708 aa).

Residues 67–93 (SSLRVSGTTPVTIRRNSTGGVTENLAG) are compositionally biased toward polar residues. Positions 67 to 255 (SSLRVSGTTP…KTSTPESRDS (189 aa)) are disordered. Residues 110–121 (DPVRRSLPELRK) show a composition bias toward basic and acidic residues. Residues 122–134 (SSVSSLSAKTVSK) show a composition bias toward low complexity. Residues 149–165 (GSRSLTKSTGFSLSKPE) show a composition bias toward polar residues. Residues 173–234 (SVSVSSKRAP…SIRSKSFSSP (62 aa)) show a composition bias toward low complexity. 7 LRR repeats span residues 267–290 (AGDD…GLHL), 291–315 (SPNL…ILNR), 316–335 (VKVL…EPLE), 337–359 (CKML…LPQL), 360–382 (PNLE…SQPR), 384–402 (QVLA…FPYL), and 403–425 (PVLE…EAAS). A9 repeat units lie at residues 489-584 (PSGY…FAIS), 601-682 (LNGE…QYKY), 698-777 (ITGD…VSTS), 793-878 (IVGD…VYVL), 895-977 (ITGD…RSCM), 994-1073 (VVGA…AISE), 1090-1167 (FLGS…RSIR), 1183-1272 (IPDC…VVVI), 1287-1365 (VRVK…KMSE), 1382-1473 (FTGK…AYAE), and 1489-1569 (IEGQ…VSAS).

Interacts with KCBP. In terms of tissue distribution, strongly expressed in dividing cells, like the meristemic region of the root tip.

It is found in the cytoplasm. Its subcellular location is the cell cortex. The protein resides in the cytoskeleton. It localises to the phragmoplast. Functionally, microtubule-associated protein that may be involved in the maturation of cell plates and proper insertion of cross-walls after cytokinesis. This is 187-kDa microtubule-associated protein AIR9 from Arabidopsis thaliana (Mouse-ear cress).